A 331-amino-acid polypeptide reads, in one-letter code: MQEDSKVYDITVIGGGPVGLFTAFYGGMRQASVKIIESLPQLGGQLSALYPEKYIYDVAGFPKIRAQELVNNLKEQMAKFDQTICLEQAVESVEKQADGVFKLVTNSETHYSKTVIITAGNGAFKPRKLELESAEQYEGKNLHYFIDDLNQFAGRRVAVLGGGDSAVDWALMLEPIAKEVSIIHRRDKFRAHEHSVENLHNSKVNVLTPFVPAELVGEDRIEQLVLEEVKGDRKEIIEIDDLIVNYGFVSSLGPIKNWGLDIEKNSIVVKSTMETNIEGFFAAGDICTYEGKVKLIASGFGEAPTAVNNAKAYMDPKARVQPLHSTSMFEK.

7 residues coordinate FAD: glutamate 37, glutamine 45, tyrosine 50, valine 90, phenylalanine 124, aspartate 285, and threonine 326.

It belongs to the ferredoxin--NADP reductase type 2 family. As to quaternary structure, homodimer. FAD is required as a cofactor.

The catalysed reaction is 2 reduced [2Fe-2S]-[ferredoxin] + NADP(+) + H(+) = 2 oxidized [2Fe-2S]-[ferredoxin] + NADPH. The polypeptide is Ferredoxin--NADP reductase 2 (Bacillus velezensis (strain DSM 23117 / BGSC 10A6 / LMG 26770 / FZB42) (Bacillus amyloliquefaciens subsp. plantarum)).